A 140-amino-acid polypeptide reads, in one-letter code: Interleukin-4 (140 aa).

Residues 1–20 (MGLNPQLVVILLFFLECTRS) form the signal peptide. 3 cysteine pairs are disulfide-bonded: Cys25–Cys107, Cys47–Cys87, and Cys69–Cys114. N-linked (GlcNAc...) asparagine glycans are attached at residues Asn61, Asn91, and Asn117.

Belongs to the IL-4/IL-13 family. In terms of assembly, interacts with IL4R. Interacts with IL13RA1.

The protein resides in the secreted. Functionally, cytokine secreted primarily by mast cells, T-cells, eosinophils, and basophils that plays a role in regulating antibody production, hematopoiesis and inflammation, and the development of effector T-cell responses. Induces the expression of class II MHC molecules on resting B-cells. Enhances both secretion and cell surface expression of IgE and IgG1. Also regulates the expression of the low affinity Fc receptor for IgE (CD23) on both lymphocytes and monocytes. Positively regulates IL31RA expression in macrophages. Stimulates autophagy in dendritic cells by interfering with mTORC1 signaling and through the induction of RUFY4. In addition, plays a critical role in higher functions of the normal brain, such as memory and learning. Upon binding to IL4, IL4R receptor dimerizes either with the common IL2R gamma chain/IL2RG to produce the type 1 signaling complex, located mainly on hematopoietic cells, or with the IL13RA1 to produce the type 2 complex, which is also expressed on nonhematopoietic cells. Engagement of both types of receptors initiates JAK3 and to a lower extend JAK1 phosphorylation leading to activation of the signal transducer and activator of transcription 6/STAT6. The sequence is that of Interleukin-4 (Il4) from Mus musculus (Mouse).